Here is a 639-residue protein sequence, read N- to C-terminus: MKVVDPDIGTGGSTVITASETRTLRVSTAPHLAPGADPTMIRNFCIIAHIDHGKSTLADRMLGVTGVVEARNMRAQYLDRMDIERERGITIKAQNVRLPWRADDGRDYILHLIDTPGHVDFSYEVSRSLAACEGAVLLVDAAQGIEAQTLANLYLAIENDLTIVPVLNKIDLPAAQPEKYAEEIAAIIGCEPGEVLRVSGKTGQGVPELLNEIVRRVPAPVGDPDGPARAMIFDSVYDIYRGVITYVRVVDGTLTTRDRCLMMSTSASHETLEVGVISPDPHPTGSLSVGEVGYVIPGVKDVRQARVGDTITTTRRPATEMLGGYRDPLPMVYSGLYPIDGSEYPALREALDKLQLNDAALTYEPETSAALGFGFRCGFLGLLHLEIVRERLEREFNLTLISTAPNVVYRVVMEDHSEIIVTNPSDWPGGKIAEVYEPVVEAMLLLPTDFVGAVMELCQGRRGVLKGMDYLSTDRVELKYTLPLGEIIFDFFDALKSRTRGYASLDYEPAGEQLADLVKVDILLQGETVDAFSAIVHREKAYAYGVSMTTKLRELIPRQQFEVPIQAAIGSRIIARENIRAIRKDVLAKCYGGDITRKRKLLEKQKEGKKRMKTIGRVEVPQEAFIAALSTDTGKPAVK.

Positions 39–221 (TMIRNFCIIA…EIVRRVPAPV (183 aa)) constitute a tr-type G domain. Residues 51 to 56 (DHGKST) and 168 to 171 (NKID) each bind GTP.

It belongs to the TRAFAC class translation factor GTPase superfamily. Classic translation factor GTPase family. LepA subfamily.

It is found in the cell membrane. It catalyses the reaction GTP + H2O = GDP + phosphate + H(+). Functionally, required for accurate and efficient protein synthesis under certain stress conditions. May act as a fidelity factor of the translation reaction, by catalyzing a one-codon backward translocation of tRNAs on improperly translocated ribosomes. Back-translocation proceeds from a post-translocation (POST) complex to a pre-translocation (PRE) complex, thus giving elongation factor G a second chance to translocate the tRNAs correctly. Binds to ribosomes in a GTP-dependent manner. In Frankia casuarinae (strain DSM 45818 / CECT 9043 / HFP020203 / CcI3), this protein is Elongation factor 4.